We begin with the raw amino-acid sequence, 421 residues long: Imidazolonepropionase (421 aa).

Fe(3+) is bound by residues His-81 and His-83. Zn(2+) is bound by residues His-81 and His-83. The 4-imidazolone-5-propanoate site is built by Arg-90, Tyr-153, and His-186. Residue Tyr-153 coordinates N-formimidoyl-L-glutamate. Fe(3+) is bound at residue His-251. Residue His-251 coordinates Zn(2+). Residue Glu-254 participates in 4-imidazolone-5-propanoate binding. Fe(3+) is bound at residue Asp-326. Asp-326 lines the Zn(2+) pocket. Residues Asn-328 and Gly-330 each coordinate N-formimidoyl-L-glutamate. A 4-imidazolone-5-propanoate-binding site is contributed by Ser-331.

It belongs to the metallo-dependent hydrolases superfamily. HutI family. Zn(2+) serves as cofactor. Fe(3+) is required as a cofactor.

Its subcellular location is the cytoplasm. The catalysed reaction is 4-imidazolone-5-propanoate + H2O = N-formimidoyl-L-glutamate. It participates in amino-acid degradation; L-histidine degradation into L-glutamate; N-formimidoyl-L-glutamate from L-histidine: step 3/3. In terms of biological role, catalyzes the hydrolytic cleavage of the carbon-nitrogen bond in imidazolone-5-propanoate to yield N-formimidoyl-L-glutamate. It is the third step in the universal histidine degradation pathway. In Streptococcus sanguinis (strain SK36), this protein is Imidazolonepropionase.